A 444-amino-acid polypeptide reads, in one-letter code: Tol-Pal system protein TolB (444 aa).

The signal sequence occupies residues 1-19 (MRNIIYFILSLLFSFASYA).

The protein belongs to the TolB family. The Tol-Pal system is composed of five core proteins: the inner membrane proteins TolA, TolQ and TolR, the periplasmic protein TolB and the outer membrane protein Pal. They form a network linking the inner and outer membranes and the peptidoglycan layer.

The protein resides in the periplasm. In terms of biological role, part of the Tol-Pal system, which plays a role in outer membrane invagination during cell division and is important for maintaining outer membrane integrity. The polypeptide is Tol-Pal system protein TolB (Rickettsia massiliae (strain Mtu5)).